Consider the following 688-residue polypeptide: Potassium-transporting ATPase ATP-binding subunit (688 aa).

Helical transmembrane passes span 35–55 (VMFV…QALG), 62–82 (AGFI…ANFA), 219–239 (IALT…IVTL), and 260–280 (VLIA…LSAI). Asp-313 functions as the 4-aspartylphosphate intermediate in the catalytic mechanism. ATP contacts are provided by residues Asp-350, Glu-354, 383-390 (FSAHTRMS), and Lys-401. Residues Asp-524 and Asp-528 each contribute to the Mg(2+) site. The next 3 helical transmembrane spans lie at 594–614 (FAII…LNVM), 622–642 (AILS…PLAL), and 668–688 (VIVP…VGLA).

Belongs to the cation transport ATPase (P-type) (TC 3.A.3) family. Type IA subfamily. In terms of assembly, the system is composed of three essential subunits: KdpA, KdpB and KdpC.

The protein localises to the cell inner membrane. The catalysed reaction is K(+)(out) + ATP + H2O = K(+)(in) + ADP + phosphate + H(+). Part of the high-affinity ATP-driven potassium transport (or Kdp) system, which catalyzes the hydrolysis of ATP coupled with the electrogenic transport of potassium into the cytoplasm. This subunit is responsible for energy coupling to the transport system and for the release of the potassium ions to the cytoplasm. The polypeptide is Potassium-transporting ATPase ATP-binding subunit (Dechloromonas aromatica (strain RCB)).